We begin with the raw amino-acid sequence, 449 residues long: Tubulin alpha-1 chain (449 aa).

GTP contacts are provided by Gln-11, Glu-71, Ser-140, Gly-144, Thr-145, Thr-179, Asn-206, and Asn-228. Mg(2+) is bound at residue Glu-71. Glu-254 is an active-site residue.

Belongs to the tubulin family. As to quaternary structure, dimer of alpha and beta chains. A typical microtubule is a hollow water-filled tube with an outer diameter of 25 nm and an inner diameter of 15 nM. Alpha-beta heterodimers associate head-to-tail to form protofilaments running lengthwise along the microtubule wall with the beta-tubulin subunit facing the microtubule plus end conferring a structural polarity. Microtubules usually have 13 protofilaments but different protofilament numbers can be found in some organisms and specialized cells. Mg(2+) is required as a cofactor.

The protein resides in the cytoplasm. It localises to the cytoskeleton. It carries out the reaction GTP + H2O = GDP + phosphate + H(+). In terms of biological role, tubulin is the major constituent of microtubules, a cylinder consisting of laterally associated linear protofilaments composed of alpha- and beta-tubulin heterodimers. Microtubules grow by the addition of GTP-tubulin dimers to the microtubule end, where a stabilizing cap forms. Below the cap, tubulin dimers are in GDP-bound state, owing to GTPase activity of alpha-tubulin. In Emericella nidulans (strain FGSC A4 / ATCC 38163 / CBS 112.46 / NRRL 194 / M139) (Aspergillus nidulans), this protein is Tubulin alpha-1 chain (tubA).